Consider the following 621-residue polypeptide: tRNA uridine 5-carboxymethylaminomethyl modification enzyme MnmG (621 aa).

FAD is bound at residue 8 to 13 (GAGHAG). Residues 199–227 (PRIDRRSVDYSRVEEQKGDENPPPFSFST) form a disordered region. A compositionally biased stretch (basic and acidic residues) spans 200–218 (RIDRRSVDYSRVEEQKGDE). NAD(+) is bound at residue 269-283 (GPRYCPSIEDKIFRF).

The protein belongs to the MnmG family. Homodimer. Heterotetramer of two MnmE and two MnmG subunits. It depends on FAD as a cofactor.

It is found in the cytoplasm. In terms of biological role, NAD-binding protein involved in the addition of a carboxymethylaminomethyl (cmnm) group at the wobble position (U34) of certain tRNAs, forming tRNA-cmnm(5)s(2)U34. The polypeptide is tRNA uridine 5-carboxymethylaminomethyl modification enzyme MnmG (Chlorobium luteolum (strain DSM 273 / BCRC 81028 / 2530) (Pelodictyon luteolum)).